A 2835-amino-acid polypeptide reads, in one-letter code: Vanchrobactin synthetase VabF (2835 aa).

The tract at residues 16–452 (EDQWPLIGTQ…IPPSEKQQIT (437 aa)) is condensation 1. The tract at residues 473–880 (QQTVESKPNE…GRCDHQIKIR (408 aa)) is adenylation 1. In terms of domain architecture, Carrier 1 spans 988 to 1062 (APITQPEQLL…MMAGQMVPLQ (75 aa)). Ser1023 is subject to O-(pantetheine 4'-phosphoryl)serine. Condensation stretches follow at residues 1081–1499 (WFEE…KIQQ) and 1539–1961 (DVLP…EWDL). Positions 1992–2394 (QQQRSPHQLA…GRSDDQIKIR (403 aa)) are adenylation 2. The region spanning 2503–2578 (NAHPGLETQL…KLASLLLDDD (76 aa)) is the Carrier 2 domain. The residue at position 2538 (Ser2538) is an O-(pantetheine 4'-phosphoryl)serine. Residues 2601 to 2821 (ALFCVNSASG…APENVRQIGE (221 aa)) are thioesterase.

Belongs to the NRP synthetase family. Pantetheine 4'-phosphate is required as a cofactor.

The catalysed reaction is holo-[peptidyl-carrier protein] + L-arginine + ATP = L-arginyl-[peptidyl-carrier protein] + AMP + diphosphate. The enzyme catalyses holo-[peptidyl-carrier protein] + L-serine + ATP = L-seryl-[peptidyl-carrier protein] + AMP + diphosphate. Its pathway is siderophore biosynthesis. In terms of biological role, involved in the synthesis of the siderophore vanchrobactin. Probably adenylates L-arginine via its first adenylation domain and loads it onto its first peptidyl carrier domain via a thioester linkage to the phosphopanthetheine moiety. In addition, may adenylate L-serine via its second adenylation domain and loads it onto its second peptidyl carrier domain via a thioester linkage to the phosphopanthetheine moiety. The thioesterase domain may release vanchrobactin after condensation of the siderophore components. This is Vanchrobactin synthetase VabF from Vibrio anguillarum (Listonella anguillarum).